The sequence spans 220 residues: uncharacterized protein (220 aa).

The helical transmembrane segment at 10-30 (FFIIGGVILSIGLILFFLLGF) threads the bilayer.

It localises to the membrane. This is an uncharacterized protein from Methanocaldococcus jannaschii (strain ATCC 43067 / DSM 2661 / JAL-1 / JCM 10045 / NBRC 100440) (Methanococcus jannaschii).